We begin with the raw amino-acid sequence, 1213 residues long: Probable ATP-binding protein BrxC (1213 aa).

Belongs to the BrxC family.

In terms of biological role, BREX systems (bacteriophage exclusion) provide immunity against bacteriophage. Part of a type 1 BREX system which protects against dsDNA phage. This system allows phage adsorption but prevents phage DNA replication, without degradation of the phage DNA. Methylation of bacterial DNA by PglX guides self/non-self discrimination. When the brxA-brxB-brxC-pglX-pglZ-brxL genes are transformed into a susceptible E.coli strain (BW25113) they confer very high resistance to infection by bacteriophage VR7 and VpaE1, about 100-fold protection against lambda, T5 and T7 and no protection against RNA phage Qbeta, ssDNA phage M13 or dSDNA phage T4 and VR5. Glycosylated phage DNA is not susceptible to BREX. The BREX system does not confer resistance to lysogenic lambda phage, i.e. prophage that are integrated into the chromosomal DNA and then induced to form phage. In Escherichia coli O9:H4 (strain HS), this protein is Probable ATP-binding protein BrxC.